The chain runs to 347 residues: DNA-directed RNA polymerase subunit alpha (347 aa).

The tract at residues 1–243 is alpha N-terminal domain (alpha-NTD); it reads MLIKQGDRLI…DQISVFINFD (243 aa). Residues 260–347 are alpha C-terminal domain (alpha-CTD); it reads VNENLFKGID…EWKRKQQNEA (88 aa).

Belongs to the RNA polymerase alpha chain family. As to quaternary structure, homodimer. The RNAP catalytic core consists of 2 alpha, 1 beta, 1 beta' and 1 omega subunit. When a sigma factor is associated with the core the holoenzyme is formed, which can initiate transcription.

It catalyses the reaction RNA(n) + a ribonucleoside 5'-triphosphate = RNA(n+1) + diphosphate. In terms of biological role, DNA-dependent RNA polymerase catalyzes the transcription of DNA into RNA using the four ribonucleoside triphosphates as substrates. This chain is DNA-directed RNA polymerase subunit alpha, found in Nitratidesulfovibrio vulgaris (strain DSM 19637 / Miyazaki F) (Desulfovibrio vulgaris).